We begin with the raw amino-acid sequence, 733 residues long: Non-secreted LysM effector LCP1 (733 aa).

A signal peptide spans 1-22 (MMRRPWLLSALVAWVKLPSVQG). LysM domains are found at residues 211–256 (SEYT…KLCI) and 261–309 (DVYV…TICI). N-linked (GlcNAc...) asparagine glycans are attached at residues asparagine 298, asparagine 304, asparagine 340, asparagine 350, asparagine 381, asparagine 432, asparagine 442, asparagine 455, and asparagine 538. Residues 347-393 (LFHNVTAGDDCGTIGLKYSISLDDFIFLNSMIWPNCTNLWLRASYCV) enclose the LysM 3 domain. Residues 605–629 (SPITSSAPTSTTASSKTSSSAAQPT) are compositionally biased toward low complexity. Residues 605–637 (SPITSSAPTSTTASSKTSSSAAQPTNVSTDGTC) are disordered. N-linked (GlcNAc...) asparagine glycosylation occurs at asparagine 630. Chitin-binding type-1 domains lie at 634–680 (DGTC…KCDA) and 688–733 (DGTC…GVCT). 8 disulfides stabilise this stretch: cysteine 637-cysteine 654, cysteine 645-cysteine 660, cysteine 653-cysteine 667, cysteine 671-cysteine 678, cysteine 691-cysteine 708, cysteine 699-cysteine 714, cysteine 707-cysteine 721, and cysteine 725-cysteine 732.

The protein belongs to the secreted LysM effector family.

It is found in the secreted. Its subcellular location is the cell membrane. The protein resides in the vacuole. Its function is as follows. Secreted effector that enables the plant pathogenic fungus to manipulate host defenses for successful infection. Not involved in host recognition and penetration but suppresses host cell death and promotes fumonisin biosynthesis while the pathogen colonizes maize kernels. This Gibberella moniliformis (strain M3125 / FGSC 7600) (Maize ear and stalk rot fungus) protein is Non-secreted LysM effector LCP1.